Consider the following 389-residue polypeptide: Sterol methyltransferase-like 1 (389 aa).

The helical transmembrane segment at 25 to 45 threads the bilayer; the sequence is IAAGVTAAVVIGGYIWIITEL.

The protein belongs to the class I-like SAM-binding methyltransferase superfamily. Erg6/SMT family.

Its subcellular location is the microsome membrane. Its function is as follows. Unable to convert squalene, botryococcene, cycloartenol, zymosterol or lanosterol to mono-, di-, tri- or tetramethylated derivatives. This chain is Sterol methyltransferase-like 1 (SMT-1), found in Botryococcus braunii (Green alga).